Consider the following 210-residue polypeptide: Uridine kinase (210 aa).

12–19 (GGSGGGKT) is an ATP binding site.

It belongs to the uridine kinase family.

The protein localises to the cytoplasm. It carries out the reaction uridine + ATP = UMP + ADP + H(+). The enzyme catalyses cytidine + ATP = CMP + ADP + H(+). Its pathway is pyrimidine metabolism; CTP biosynthesis via salvage pathway; CTP from cytidine: step 1/3. It functions in the pathway pyrimidine metabolism; UMP biosynthesis via salvage pathway; UMP from uridine: step 1/1. The sequence is that of Uridine kinase from Streptococcus uberis (strain ATCC BAA-854 / 0140J).